We begin with the raw amino-acid sequence, 162 residues long: MLISLIAALAHNNLIGKDNLIPWHLPADLRHFKAVTLGKPVVMGRRTFESIGRPLPGRRNVVVSRNPQWQAEGVEVAPSLDAALALLTDCEEAMIIGGGQLYAEALPRADRLYLTYIDAQLNGDTHFPDYLSLGWQELERSTHPADDKNSYACEFVTLSRQR.

The DHFR domain maps to 2–160 (LISLIAALAH…YACEFVTLSR (159 aa)).

It belongs to the dihydrofolate reductase family. In terms of assembly, monomer.

The enzyme catalyses (6S)-5,6,7,8-tetrahydrofolate + NADP(+) = 7,8-dihydrofolate + NADPH + H(+). It participates in cofactor biosynthesis; tetrahydrofolate biosynthesis; 5,6,7,8-tetrahydrofolate from 7,8-dihydrofolate: step 1/1. Its function is as follows. Key enzyme in folate metabolism. Catalyzes an essential reaction for de novo glycine and purine synthesis, and for DNA precursor synthesis. In Salmonella typhimurium, this protein is Dihydrofolate reductase type 3 (dhfrIII).